The primary structure comprises 700 residues: Transketolase (700 aa).

Threonine 2 bears the N-acetylthreonine mark. Histidine 45 serves as a coordination point for substrate. Residues threonine 48, histidine 85, 133–135 (GPL), and leucine 135 contribute to the thiamine diphosphate site. A Mg(2+)-binding site is contributed by aspartate 177. Glycine 178 and asparagine 207 together coordinate thiamine diphosphate. 2 residues coordinate Mg(2+): asparagine 207 and isoleucine 209. Substrate is bound by residues histidine 283, arginine 378, and serine 405. Histidine 283 is a binding site for thiamine diphosphate. Glutamate 441 serves as the catalytic Proton donor. Thiamine diphosphate is bound at residue phenylalanine 467. Substrate is bound by residues histidine 491, aspartate 499, and arginine 552.

This sequence belongs to the transketolase family. As to quaternary structure, homodimer. Mg(2+) serves as cofactor. Ca(2+) is required as a cofactor. The cofactor is Mn(2+). Requires Co(2+) as cofactor. It depends on thiamine diphosphate as a cofactor.

It catalyses the reaction D-sedoheptulose 7-phosphate + D-glyceraldehyde 3-phosphate = aldehydo-D-ribose 5-phosphate + D-xylulose 5-phosphate. Functionally, catalyzes the reversible transfer of a two-carbon ketol group from sedoheptulose-7-phosphate to glyceraldehyde-3-phosphate, producing xylulose-5-phosphate and ribose-5-phosphate. Catalyzes the transfer of a two-carbon ketol group from a ketose donor to an aldose acceptor, via a covalent intermediate with the cofactor thiamine pyrophosphate. In Mycobacterium tuberculosis (strain ATCC 25618 / H37Rv), this protein is Transketolase (tkt).